The following is a 176-amino-acid chain: Transcription factor E (176 aa).

The HTH TFE/IIEalpha-type domain occupies 8 to 90 (EDPVIQKYLH…LWTFQYEKIP (83 aa)).

It belongs to the TFE family. Monomer. Interaction with RNA polymerase subunits RpoF and RpoE is necessary for Tfe stimulatory transcription activity. Able to interact with Tbp and RNA polymerase in the absence of DNA promoter. Interacts both with the preinitiation and elongation complexes.

In terms of biological role, transcription factor that plays a role in the activation of archaeal genes transcribed by RNA polymerase. Facilitates transcription initiation by enhancing TATA-box recognition by TATA-box-binding protein (Tbp), and transcription factor B (Tfb) and RNA polymerase recruitment. Not absolutely required for transcription in vitro, but particularly important in cases where Tbp or Tfb function is not optimal. It dynamically alters the nucleic acid-binding properties of RNA polymerases by stabilizing the initiation complex and destabilizing elongation complexes. Seems to translocate with the RNA polymerase following initiation and acts by binding to the non template strand of the transcription bubble in elongation complexes. The protein is Transcription factor E of Haloarcula marismortui (strain ATCC 43049 / DSM 3752 / JCM 8966 / VKM B-1809) (Halobacterium marismortui).